The primary structure comprises 66 residues: MVAKQRIRMANEKHSKNITQRGNVAKTSRNAPGEKASVGPWLLALFIFVVCGSAIFQIIQSIRMGM.

Positions 1 to 33 (MVAKQRIRMANEKHSKNITQRGNVAKTSRNAPG) are disordered. The Cytoplasmic segment spans residues 1–38 (MVAKQRIRMANEKHSKNITQRGNVAKTSRNAPGEKASV). Over residues 17 to 30 (NITQRGNVAKTSRN) the composition is skewed to polar residues. The chain crosses the membrane as a helical span at residues 39–59 (GPWLLALFIFVVCGSAIFQII). Over 60–66 (QSIRMGM) the chain is Extracellular.

This sequence belongs to the RAMP4 family. As to quaternary structure, interacts with SEC61B, SEC61A1 and the SEC61 complex. Interacts with CANX.

Its subcellular location is the membrane. It is found in the endoplasmic reticulum membrane. Its function is as follows. Interacts with target proteins during their translocation into the lumen of the endoplasmic reticulum. Protects unfolded target proteins against degradation during ER stress. May facilitate glycosylation of target proteins after termination of ER stress. May modulate the use of N-glycosylation sites on target proteins. In Pongo abelii (Sumatran orangutan), this protein is Stress-associated endoplasmic reticulum protein 1 (SERP1).